We begin with the raw amino-acid sequence, 920 residues long: WD repeat-containing protein 47 (920 aa).

The LisH domain occupies 10-42 (KEVEIIKLILDFLNSKKLHISMLALEKESGVIN). The region spanning 45-102 (FSDDMLFLRQLILDGQWDEVLQFIQPLECMEKFDKKRFRYIILKQKFLEALCVNNAMS) is the CTLH domain. Thr-285 is subject to Phosphothreonine. A phosphoserine mark is found at Ser-289, Ser-292, Ser-297, and Ser-312. A compositionally biased stretch (basic and acidic residues) spans 371 to 380 (YEESPERSDT). The interval 371 to 422 (YEESPERSDTPVEAQQPVSSEAMCQGSGLEKEPANGAQNPVPAKQEKNELRD) is disordered. Phosphoserine is present on Ser-423. The segment at 501–594 (LNQQCSGSKN…RSKGEEDDKS (94 aa)) is disordered. A compositionally biased stretch (low complexity) spans 506 to 523 (SGSKNNGSNNSSVTSFST). The segment covering 538 to 552 (NIHTSTPRNPGSTNH) has biased composition (polar residues). Thr-543 bears the Phosphothreonine mark. WD repeat units lie at residues 605-644 (EDTQAVRAVAFHPSGSLYAVGSNSKTLRVCAYPEKMDASA), 660-699 (HHKGSIYCVAWSPCGQLLATGSNDKYVKVLPFNAETCNAT), 707-749 (MHDG…GQGL), 754-792 (GHTGHILALYTWSGWMIASGSQDKTVRFWDLRVPSCVRV), 799-838 (GTGSAVASVAVDPSGRLLATGQEDSSCMLYDIRGGRMVQS), 841-880 (PHSSDVRSVRFSPGAHYLLTGSYDMKIKVTDLQGDLTKQL), and 887-919 (EHKDKVIQCRWHTQDLSFLSSSADRTVTLWTYS).

Interacts with MAP1S (via WD repeats). Enriched in the nervous system (at protein level).

The protein resides in the cytoplasm. It localises to the cytoskeleton. This is WD repeat-containing protein 47 (Wdr47) from Mus musculus (Mouse).